Reading from the N-terminus, the 370-residue chain is 4-hydroxy-3-methylbut-2-en-1-yl diphosphate synthase (flavodoxin) (370 aa).

[4Fe-4S] cluster-binding residues include Cys-268, Cys-271, Cys-303, and Glu-310.

This sequence belongs to the IspG family. Requires [4Fe-4S] cluster as cofactor.

The catalysed reaction is (2E)-4-hydroxy-3-methylbut-2-enyl diphosphate + oxidized [flavodoxin] + H2O + 2 H(+) = 2-C-methyl-D-erythritol 2,4-cyclic diphosphate + reduced [flavodoxin]. It functions in the pathway isoprenoid biosynthesis; isopentenyl diphosphate biosynthesis via DXP pathway; isopentenyl diphosphate from 1-deoxy-D-xylulose 5-phosphate: step 5/6. Functionally, converts 2C-methyl-D-erythritol 2,4-cyclodiphosphate (ME-2,4cPP) into 1-hydroxy-2-methyl-2-(E)-butenyl 4-diphosphate. The polypeptide is 4-hydroxy-3-methylbut-2-en-1-yl diphosphate synthase (flavodoxin) (Bacillus cereus (strain G9842)).